The sequence spans 129 residues: Small ribosomal subunit protein uS9 (129 aa).

It belongs to the universal ribosomal protein uS9 family.

This Thermoplasma acidophilum (strain ATCC 25905 / DSM 1728 / JCM 9062 / NBRC 15155 / AMRC-C165) protein is Small ribosomal subunit protein uS9 (rps9).